A 433-amino-acid polypeptide reads, in one-letter code: 3-phosphoshikimate 1-carboxyvinyltransferase (433 aa).

The 3-phosphoshikimate site is built by lysine 21, serine 22, and arginine 26. Lysine 21 contacts phosphoenolpyruvate. Glycine 92 and arginine 120 together coordinate phosphoenolpyruvate. 4 residues coordinate 3-phosphoshikimate: serine 166, glutamine 168, aspartate 317, and lysine 344. Position 168 (glutamine 168) interacts with phosphoenolpyruvate. Aspartate 317 functions as the Proton acceptor in the catalytic mechanism. 2 residues coordinate phosphoenolpyruvate: arginine 348 and arginine 391.

The protein belongs to the EPSP synthase family. Monomer.

The protein localises to the cytoplasm. It carries out the reaction 3-phosphoshikimate + phosphoenolpyruvate = 5-O-(1-carboxyvinyl)-3-phosphoshikimate + phosphate. It functions in the pathway metabolic intermediate biosynthesis; chorismate biosynthesis; chorismate from D-erythrose 4-phosphate and phosphoenolpyruvate: step 6/7. Its function is as follows. Catalyzes the transfer of the enolpyruvyl moiety of phosphoenolpyruvate (PEP) to the 5-hydroxyl of shikimate-3-phosphate (S3P) to produce enolpyruvyl shikimate-3-phosphate and inorganic phosphate. This chain is 3-phosphoshikimate 1-carboxyvinyltransferase, found in Caldicellulosiruptor bescii (strain ATCC BAA-1888 / DSM 6725 / KCTC 15123 / Z-1320) (Anaerocellum thermophilum).